Consider the following 261-residue polypeptide: Synaptophysin-like protein 1 (261 aa).

Topologically, residues 1-33 are cytoplasmic; the sequence is MASKANMVRQRFSRLSQRMSAFQINLNPLKEPL. Residues 28–239 enclose the MARVEL domain; sequence PLKEPLGFIK…NAWFVYKETS (212 aa). A helical transmembrane segment spans residues 34–54; it reads GFIKILEWFASIFAFATCGGF. Topologically, residues 55–117 are vesicular; that stretch reads KGKTEIQVNC…LIGDYSSSAQ (63 aa). 2 N-linked (GlcNAc...) asparagine glycosylation sites follow: Asn-72 and Asn-95. The helical transmembrane segment at 118–138 threads the bilayer; the sequence is FYVTFAVFVFLYCIAALLLYV. Topologically, residues 139-151 are cytoplasmic; it reads GYTNLYRDSRKLP. Residues 152-172 form a helical membrane-spanning segment; sequence MIDFIVTLVATFLWLVSSSAW. Over 173–214 the chain is Vesicular; sequence AKALTDIKVATGHRIVEELEICNPESGVSCYFVSVTSMGSLN. Asn-214 carries N-linked (GlcNAc...) asparagine glycosylation. A helical transmembrane segment spans residues 215 to 235; the sequence is VSVIFGFLNMILWGGNAWFVY. Residues 236-261 lie on the Cytoplasmic side of the membrane; it reads KETSLHSPSNTSASHSQGGGPPTSGM. Residues 241–251 are compositionally biased toward polar residues; that stretch reads HSPSNTSASHS. The segment at 241–261 is disordered; that stretch reads HSPSNTSASHSQGGGPPTSGM. Residues 252–261 show a composition bias toward gly residues; it reads QGGGPPTSGM.

It belongs to the synaptophysin/synaptobrevin family. In terms of tissue distribution, ubiquitously expressed.

Its subcellular location is the cytoplasmic vesicle membrane. It is found in the melanosome. The sequence is that of Synaptophysin-like protein 1 (Sypl1) from Mus musculus (Mouse).